The following is a 117-amino-acid chain: MAEQISSARAEARTVRIAPRKARLVVDLIRGKSVAEALAILKFTPKAASPIVEKVLRSAVANAEHNYDLESANLYVSEAYVNEGATLKRFRPRAKGSASPIMKRTSHVVVVVSELND.

Belongs to the universal ribosomal protein uL22 family. Part of the 50S ribosomal subunit.

Its function is as follows. This protein binds specifically to 23S rRNA; its binding is stimulated by other ribosomal proteins, e.g. L4, L17, and L20. It is important during the early stages of 50S assembly. It makes multiple contacts with different domains of the 23S rRNA in the assembled 50S subunit and ribosome. Functionally, the globular domain of the protein is located near the polypeptide exit tunnel on the outside of the subunit, while an extended beta-hairpin is found that lines the wall of the exit tunnel in the center of the 70S ribosome. The chain is Large ribosomal subunit protein uL22 from Lactobacillus delbrueckii subsp. bulgaricus (strain ATCC 11842 / DSM 20081 / BCRC 10696 / JCM 1002 / NBRC 13953 / NCIMB 11778 / NCTC 12712 / WDCM 00102 / Lb 14).